A 195-amino-acid chain; its full sequence is Ubiquitin-conjugating enzyme E2 T (195 aa).

Residues 2–152 (QRTSRLKREL…ARQWTEKHAR (151 aa)) form the UBC core domain. Residue Cys86 is the Glycyl thioester intermediate of the active site. Lys91 is covalently cross-linked (Glycyl lysine isopeptide (Lys-Gly) (interchain with G-Cter in ubiquitin)). A compositionally biased stretch (basic and acidic residues) spans 146–157 (WTEKHARQKTDE). The tract at residues 146–195 (WTEKHARQKTDEEGMPGSLPEVGGSEGPSAAQKRKAGQLSSGGKRFCPDV) is disordered. A Glycyl lysine isopeptide (Lys-Gly) (interchain with G-Cter in ubiquitin) cross-link involves residue Lys180. Residue Lys189 forms a Glycyl lysine isopeptide (Lys-Gly) (interchain with G-Cter in SUMO2) linkage.

It belongs to the ubiquitin-conjugating enzyme family. Interacts with FANCL and BRCA1. Post-translationally, auto-ubiquitinated. Effects of auto-monoubiquitination at Lys-91 and Lys-180 are unclear.

It is found in the nucleus. It catalyses the reaction S-ubiquitinyl-[E1 ubiquitin-activating enzyme]-L-cysteine + [E2 ubiquitin-conjugating enzyme]-L-cysteine = [E1 ubiquitin-activating enzyme]-L-cysteine + S-ubiquitinyl-[E2 ubiquitin-conjugating enzyme]-L-cysteine.. Its pathway is protein modification; protein ubiquitination. Accepts ubiquitin from the E1 complex and catalyzes its covalent attachment to other proteins. Catalyzes monoubiquitination. Involved in mitomycin-C (MMC)-induced DNA repair: acts as a specific E2 ubiquitin-conjugating enzyme for the Fanconi anemia complex by associating with E3 ubiquitin-protein ligase FANCL and catalyzing monoubiquitination of FANCD2, a key step in the DNA damage pathway. Also mediates monoubiquitination of FANCL and FANCI. May contribute to ubiquitination and degradation of BRCA1. In vitro able to promote polyubiquitination using all 7 ubiquitin Lys residues, but may prefer 'Lys-11'-, 'Lys-27'-, 'Lys-48'- and 'Lys-63'-linked polyubiquitination. The chain is Ubiquitin-conjugating enzyme E2 T (UBE2T) from Bos taurus (Bovine).